A 237-amino-acid chain; its full sequence is Fluoroquinolones export permease protein MT2761 (237 aa).

6 consecutive transmembrane segments (helical) span residues 20-40, 49-69, 96-116, 119-139, 147-167, and 199-219; these read FLHAAVFSGLIWLAVLLPMPV, YVLVGDIAIIGFFFVGGTVFF, VLLAISLFVAVVVATIVHGLG, LLPLVAGIVLGTLLMLLVGFS, VTDWFLAAVIPLAIMLAPPVV, and LAPWQVGYAVVYPIVCAAGLC.

In terms of assembly, the complex is composed of 2 ATP-binding proteins and 2 transmembrane proteins.

Its subcellular location is the cell membrane. Functionally, part of the ABC transporter complex involved in fluoroquinolones export. Probably responsible for the translocation of the substrate across the membrane. This Mycobacterium tuberculosis (strain CDC 1551 / Oshkosh) protein is Fluoroquinolones export permease protein MT2761.